We begin with the raw amino-acid sequence, 282 residues long: Putative 4-diphosphocytidyl-2-C-methyl-D-erythritol kinase (282 aa).

The active site involves Lys-9. 93–103 (PVSAGLAGGSA) is a binding site for ATP. Asp-135 is a catalytic residue.

The protein belongs to the GHMP kinase family. IspE subfamily.

The enzyme catalyses 4-CDP-2-C-methyl-D-erythritol + ATP = 4-CDP-2-C-methyl-D-erythritol 2-phosphate + ADP + H(+). Its function is as follows. Catalyzes the phosphorylation of the position 2 hydroxy group of 4-diphosphocytidyl-2C-methyl-D-erythritol. The protein is Putative 4-diphosphocytidyl-2-C-methyl-D-erythritol kinase of Staphylococcus aureus (strain MSSA476).